A 564-amino-acid polypeptide reads, in one-letter code: Oxalyl-CoA decarboxylase (564 aa).

2 residues coordinate substrate: Ile-32 and Tyr-118. Positions 158 and 220 each coordinate ADP. Residue 261-265 participates in substrate binding; that stretch reads AAARS. ADP contacts are provided by Arg-280, Asp-302, and Ile-322. Residue Asn-355 coordinates substrate. Residues Tyr-372 and 396-398 contribute to the thiamine diphosphate site; that span reads ANT. Position 403–404 (403–404) interacts with substrate; that stretch reads RN. A thiamine diphosphate-binding site is contributed by 421–423; sequence GVM. Residue Asp-447 coordinates Mg(2+). 448 to 449 is a binding site for thiamine diphosphate; the sequence is SA. Asn-474 and Gly-476 together coordinate Mg(2+). A thiamine diphosphate-binding site is contributed by Tyr-478. Position 550-552 (550-552) interacts with substrate; that stretch reads SGH.

Belongs to the TPP enzyme family. In terms of assembly, homotetramer; dimer of dimers. Mg(2+) serves as cofactor. Requires thiamine diphosphate as cofactor.

The catalysed reaction is oxalyl-CoA + H(+) = formyl-CoA + CO2. It participates in metabolic intermediate degradation; oxalate degradation; CO(2) and formate from oxalate: step 2/2. Involved in the catabolism of oxalate and in the adapatation to low pH via the induction of the oxalate-dependent acid tolerance response (ATR). Catalyzes the decarboxylation of oxalyl-CoA to yield carbon dioxide and formyl-CoA. This Escherichia coli O157:H7 protein is Oxalyl-CoA decarboxylase (oxc).